Here is a 585-residue protein sequence, read N- to C-terminus: MTPDGLYCDPAELDWSQPSGPRARAYGDVYFSAEDGLEEARAVFLRGCGLPEAWTGRRHYVVGELGFGTGLNALALWQLWRQTRPTDGWLDFVTVEKHPLDRDAAARAFAAWPELSDLASRLLTQWPSRLRGPQRLVFPEDGFAITIFQDEVEAALSQMTRPVDAWFLDGFAPDRNAAMWSQAVFNRLGELSVPGTRVGTFTVAGFVRRGLAEAGFDVAKRPGFGRKRERLEAVWPGEAVDGSLANVDGPVAVLGAGIAGASLVHALRRRGIETVLIDAHGVASGASGAPAGLLTPRLEKADRPHVRATLAAFDFARRLYDGRPGFHAEPVRRLPKDEREAERFAILADWMPDHLDWTGEALVMPGAGRFEPARLVADLVADAQCHRARIGRVEPLGSGIGLYDDAGECRFEVAHLVIAAGAGARRFYPDLQPSAGQLAVFDGAPPDMPTAWGNYACAAPGGVLVGATHDRGDQVGPEDVAEAGFRASVAERMPGLALGPVQGRWQGVRAATPDRLPVAGRLSERVSILAGLGSRGFAHAPLLAEDLASELMGGVPALAQTGREAMAPGRFAERRSRRAGQGAAG.

The interval 1–236 (MTPDGLYCDP…KRERLEAVWP (236 aa)) is tRNA (mnm(5)s(2)U34)-methyltransferase. Residues 254–585 (LGAGIAGASL…SRRAGQGAAG (332 aa)) are FAD-dependent cmnm(5)s(2)U34 oxidoreductase. The interval 564–585 (EAMAPGRFAERRSRRAGQGAAG) is disordered.

This sequence in the N-terminal section; belongs to the methyltransferase superfamily. tRNA (mnm(5)s(2)U34)-methyltransferase family. The protein in the C-terminal section; belongs to the DAO family. FAD is required as a cofactor.

Its subcellular location is the cytoplasm. It carries out the reaction 5-aminomethyl-2-thiouridine(34) in tRNA + S-adenosyl-L-methionine = 5-methylaminomethyl-2-thiouridine(34) in tRNA + S-adenosyl-L-homocysteine + H(+). Functionally, catalyzes the last two steps in the biosynthesis of 5-methylaminomethyl-2-thiouridine (mnm(5)s(2)U) at the wobble position (U34) in tRNA. Catalyzes the FAD-dependent demodification of cmnm(5)s(2)U34 to nm(5)s(2)U34, followed by the transfer of a methyl group from S-adenosyl-L-methionine to nm(5)s(2)U34, to form mnm(5)s(2)U34. This Maricaulis maris (strain MCS10) (Caulobacter maris) protein is tRNA 5-methylaminomethyl-2-thiouridine biosynthesis bifunctional protein MnmC.